The chain runs to 199 residues: Pyridoxine/pyridoxamine 5'-phosphate oxidase (199 aa).

FMN contacts are provided by residues 44-49, 59-60, K66, and Q91; these read RTVLLK and YT. Residue K49 coordinates substrate. Substrate contacts are provided by Y109, R113, and S117. Residues 126-127 and W171 contribute to the FMN site; that span reads QS. 177-179 lines the substrate pocket; the sequence is RLH. Residue R181 participates in FMN binding.

The protein belongs to the pyridoxamine 5'-phosphate oxidase family. As to quaternary structure, homodimer. FMN is required as a cofactor.

It carries out the reaction pyridoxamine 5'-phosphate + O2 + H2O = pyridoxal 5'-phosphate + H2O2 + NH4(+). It catalyses the reaction pyridoxine 5'-phosphate + O2 = pyridoxal 5'-phosphate + H2O2. It participates in cofactor metabolism; pyridoxal 5'-phosphate salvage; pyridoxal 5'-phosphate from pyridoxamine 5'-phosphate: step 1/1. Its pathway is cofactor metabolism; pyridoxal 5'-phosphate salvage; pyridoxal 5'-phosphate from pyridoxine 5'-phosphate: step 1/1. Its function is as follows. Catalyzes the oxidation of either pyridoxine 5'-phosphate (PNP) or pyridoxamine 5'-phosphate (PMP) into pyridoxal 5'-phosphate (PLP). The protein is Pyridoxine/pyridoxamine 5'-phosphate oxidase of Xanthomonas euvesicatoria pv. vesicatoria (strain 85-10) (Xanthomonas campestris pv. vesicatoria).